The sequence spans 143 residues: Large ribosomal subunit protein uL15 (143 aa).

Residues 20–52 (GRGIGSGKGKTAGRGHKGQHSRAGGYHKVGFEG) are disordered. Over residues 30–39 (TAGRGHKGQH) the composition is skewed to basic residues.

This sequence belongs to the universal ribosomal protein uL15 family. Part of the 50S ribosomal subunit.

Binds to the 23S rRNA. The sequence is that of Large ribosomal subunit protein uL15 from Coxiella burnetii (strain CbuG_Q212) (Coxiella burnetii (strain Q212)).